Here is a 435-residue protein sequence, read N- to C-terminus: Serine--tRNA ligase (435 aa).

Position 242–244 (242–244 (TAE)) interacts with L-serine. ATP is bound at residue 273 to 275 (RSE). Glu296 contributes to the L-serine binding site. 360 to 363 (EISS) contributes to the ATP binding site. Ser396 lines the L-serine pocket.

This sequence belongs to the class-II aminoacyl-tRNA synthetase family. Type-1 seryl-tRNA synthetase subfamily. As to quaternary structure, homodimer. The tRNA molecule binds across the dimer.

Its subcellular location is the cytoplasm. It carries out the reaction tRNA(Ser) + L-serine + ATP = L-seryl-tRNA(Ser) + AMP + diphosphate + H(+). It catalyses the reaction tRNA(Sec) + L-serine + ATP = L-seryl-tRNA(Sec) + AMP + diphosphate + H(+). The protein operates within aminoacyl-tRNA biosynthesis; selenocysteinyl-tRNA(Sec) biosynthesis; L-seryl-tRNA(Sec) from L-serine and tRNA(Sec): step 1/1. Catalyzes the attachment of serine to tRNA(Ser). Is also able to aminoacylate tRNA(Sec) with serine, to form the misacylated tRNA L-seryl-tRNA(Sec), which will be further converted into selenocysteinyl-tRNA(Sec). The polypeptide is Serine--tRNA ligase (Vibrio parahaemolyticus serotype O3:K6 (strain RIMD 2210633)).